The chain runs to 118 residues: Putative pterin-4-alpha-carbinolamine dehydratase (118 aa).

The protein belongs to the pterin-4-alpha-carbinolamine dehydratase family.

The enzyme catalyses (4aS,6R)-4a-hydroxy-L-erythro-5,6,7,8-tetrahydrobiopterin = (6R)-L-erythro-6,7-dihydrobiopterin + H2O. The protein is Putative pterin-4-alpha-carbinolamine dehydratase of Xanthomonas campestris pv. campestris (strain B100).